A 1306-amino-acid polypeptide reads, in one-letter code: DNA-directed RNA polymerase subunit beta' (1306 aa).

Zn(2+) is bound by residues cysteine 214, cysteine 285, cysteine 292, and cysteine 295. Disordered stretches follow at residues 1234–1263 and 1281–1306; these read LDNGEDSLNNRYGQGERDNNNSDKKPPNRL and IARAYTEADPPWSVESKQEKDDDDDK. The span at 1247 to 1259 shows a compositional bias: basic and acidic residues; that stretch reads QGERDNNNSDKKP.

This sequence belongs to the RNA polymerase beta' chain family. RpoC2 subfamily. As to quaternary structure, in cyanobacteria the RNAP catalytic core is composed of 2 alpha, 1 beta, 1 beta', 1 gamma and 1 omega subunit. When a sigma factor is associated with the core the holoenzyme is formed, which can initiate transcription. Requires Zn(2+) as cofactor.

The enzyme catalyses RNA(n) + a ribonucleoside 5'-triphosphate = RNA(n+1) + diphosphate. Its function is as follows. DNA-dependent RNA polymerase catalyzes the transcription of DNA into RNA using the four ribonucleoside triphosphates as substrates. The protein is DNA-directed RNA polymerase subunit beta' of Crocosphaera subtropica (strain ATCC 51142 / BH68) (Cyanothece sp. (strain ATCC 51142)).